The chain runs to 146 residues: MORN repeat-containing protein 4 (146 aa).

MORN repeat units follow at residues 16-38 (YRGE…DGGT), 39-61 (YLGH…DGSR), 62-84 (YEGE…DNMT), and 85-107 (FEGE…DGSH).

In terms of assembly, interacts with MYO3A. Retina.

It is found in the cytoplasm. The protein localises to the cell projection. It localises to the filopodium tip. The protein resides in the stereocilium. Functionally, plays a role in promoting axonal degeneration following neuronal injury by toxic insult or trauma. This is MORN repeat-containing protein 4 (MORN4) from Bos taurus (Bovine).